The following is a 122-amino-acid chain: Large ribosomal subunit protein uL18 (122 aa).

Belongs to the universal ribosomal protein uL18 family. In terms of assembly, part of the 50S ribosomal subunit; part of the 5S rRNA/L5/L18/L25 subcomplex. Contacts the 5S and 23S rRNAs.

In terms of biological role, this is one of the proteins that bind and probably mediate the attachment of the 5S RNA into the large ribosomal subunit, where it forms part of the central protuberance. The chain is Large ribosomal subunit protein uL18 from Prochlorococcus marinus (strain MIT 9515).